A 373-amino-acid chain; its full sequence is D-amino-acid transaminase, chloroplastic (373 aa).

The N-terminal 57 residues, 1-57 (MAGLSLEFTVNTWNLRSLSQVPCPLRHGFRFPRRLTRRRTILMCSDSSSQSWNVPVL), are a transit peptide targeting the chloroplast. R128 is a pyridoxal 5'-phosphate binding site. Residue K222 is the Proton acceptor of the active site. The residue at position 222 (K222) is an N6-(pyridoxal phosphate)lysine. E255 is a pyridoxal 5'-phosphate binding site.

Belongs to the class-IV pyridoxal-phosphate-dependent aminotransferase family. As to quaternary structure, homodimer. Requires pyridoxal 5'-phosphate as cofactor.

Its subcellular location is the plastid. The protein localises to the chloroplast. It carries out the reaction D-alanine + 2-oxoglutarate = D-glutamate + pyruvate. It catalyses the reaction 4-amino-4-deoxychorismate = 4-aminobenzoate + pyruvate + H(+). Its pathway is cofactor biosynthesis; tetrahydrofolate biosynthesis; 4-aminobenzoate from chorismate: step 2/2. Inhibited by hydroxylamine or amino-oxyacetic acid. Its function is as follows. Amino acid aminotransferase showing activity for D-Asp and D-Ala as amino donors with 2-oxoglutarate as an amino acceptor. Can also use D-Met, D-Tyr, D-Phe, D-Gln, D-Trp and D-Asn as substrates, but no activity with L-Asp, L-Ala, L-Leu, L-Ile or L-Val. Also catalyzes the reverse reaction where an amino group is transferred from D-Glu to pyruvate or oxaloacetate to produce D-Ala or D-Asp, respectively. Also involved in folate biosynthesis, acting as an aminodeoxychorismate lyase converting 4-amino-4-deoxychorismate (ADC) to p-aminobenzoate (PABA). This Arabidopsis thaliana (Mouse-ear cress) protein is D-amino-acid transaminase, chloroplastic.